Here is a 377-residue protein sequence, read N- to C-terminus: Transcription initiation factor IIA subunit 1 (377 aa).

An N-acetylalanine modification is found at A2. 3 stretches are compositionally biased toward low complexity: residues 69 to 79 (QVQQQHQPQQQ), 89 to 105 (QAQP…TQQV), and 248 to 280 (QAQI…TGDT). Disordered stretches follow at residues 69–107 (QVQQ…QVLI) and 248–330 (QAQI…QELF). Residues S281 and S282 each carry the phosphoserine; by TAF1 modification. Residues 281–330 (SSEEDEDEEEDYDDDEEEDKEKDGAEDGQVEEEPLNSEDDVSDEEGQELF) show a composition bias toward acidic residues. S317 and S322 each carry phosphoserine. DNA contacts are provided by H344 and R345.

The protein belongs to the TFIIA subunit 1 family. In terms of assembly, TFIIA is a heterodimer of the large unprocessed subunit 1 and a small subunit gamma. It was originally believed to be a heterotrimer of an alpha (p35), a beta (p19) and a gamma subunit (p12). TFIIA forms a complex with TBP. Part of TBP-based Pol II pre-initiation complex (PIC), in which Pol II core assembles with general transcription factors and other specific initiation factors including GTF2E1, GTF2E2, GTF2F1, GTF2F2, TCEA1, ERCC2, ERCC3, GTF2H2, GTF2H3, GTF2H4, GTF2H5, GTF2A1, GTF2A2, GTF2B and TBP; this large multi-subunit PIC complex mediates DNA unwinding and targets Pol II core to the transcription start site where the first phosphodiester bond forms. The alpha and beta subunits are postranslationally produced from the precursor formby TASP1. The cleavage promotes proteasomal degradation.

It is found in the nucleus. TFIIA is a component of the transcription machinery of RNA polymerase II and plays an important role in transcriptional activation. TFIIA in a complex with TBP mediates transcriptional activity. The polypeptide is Transcription initiation factor IIA subunit 1 (Gtf2a1) (Rattus norvegicus (Rat)).